Here is a 312-residue protein sequence, read N- to C-terminus: Phosphoribosylaminoimidazole-succinocarboxamide synthase (312 aa).

Belongs to the SAICAR synthetase family.

The catalysed reaction is 5-amino-1-(5-phospho-D-ribosyl)imidazole-4-carboxylate + L-aspartate + ATP = (2S)-2-[5-amino-1-(5-phospho-beta-D-ribosyl)imidazole-4-carboxamido]succinate + ADP + phosphate + 2 H(+). Its pathway is purine metabolism; IMP biosynthesis via de novo pathway; 5-amino-1-(5-phospho-D-ribosyl)imidazole-4-carboxamide from 5-amino-1-(5-phospho-D-ribosyl)imidazole-4-carboxylate: step 1/2. The protein is Phosphoribosylaminoimidazole-succinocarboxamide synthase of Legionella pneumophila (strain Lens).